The sequence spans 450 residues: MLSFLWDLASFIVALGVLITVHEFGHFWVARRCGVRVERFSIGFGKALWRRTDKLGTEYVIALIPLGGYVKMLDERAEPVVPELRHHAFNNKSVGQRAAIIAAGPVANFIFAIFAYWLVFIIGVPGVRPVVGEIAANSIAAEAQIAPGTELKAVDGIETPDWDAVRLQLVDKIGDESTTITVAPFGSDQRRDVKLDLRHWAFEPDKEDPVSSLGIRPRGPQIEPVLENVQPNSAASKAGLQAGDRIVKVDGQPLTQWVTFVMLVRDNPGKSLALEIERQGSPLSLTLIPESKPGNGKAIGFVGIEPKVIPLPDEYKVVRQYGPFNAIVEATDKTWQLMKLTVSMLGKLITGDVKLNNLSGPISIAKGAGMTAELGVVYYLPFLALISVNLGIINLFPLPVLDGGHLLFLAIEKIKGGPVSERVQDFCYRIGSILLVLLMGLALFNDFSRL.

A helical membrane pass occupies residues 1–21 (MLSFLWDLASFIVALGVLITV). Residue His-22 coordinates Zn(2+). The Periplasmic segment spans residues 22–103 (HEFGHFWVAR…VGQRAAIIAA (82 aa)). The active site involves Glu-23. Position 26 (His-26) interacts with Zn(2+). Residues 104–124 (GPVANFIFAIFAYWLVFIIGV) traverse the membrane as a helical segment. Residues 125 to 375 (PGVRPVVGEI…KGAGMTAELG (251 aa)) are Cytoplasmic-facing. PDZ domains follow at residues 127-220 (VRPV…PRGP) and 222-309 (IEPV…PKVI). The chain crosses the membrane as a helical span at residues 376–396 (VVYYLPFLALISVNLGIINLF). The Periplasmic portion of the chain corresponds to 397–429 (PLPVLDGGHLLFLAIEKIKGGPVSERVQDFCYR). Residues 430 to 450 (IGSILLVLLMGLALFNDFSRL) traverse the membrane as a helical segment.

The protein belongs to the peptidase M50B family. In terms of assembly, interacts with RseA; the third transmembrane domain can be cross-linked to the transmembrane domain of RseA. Zn(2+) serves as cofactor.

The protein localises to the cell inner membrane. Inhibited by Zn(2+) chelator 1,10-phenanthroline. Its function is as follows. A site-2 regulated intramembrane protease (S2P) that cleaves the peptide bond between 'Ala-108' and 'Cys-109' in the transmembrane region of RseA. Part of a regulated intramembrane proteolysis (RIP) cascade. Acts on DegS-cleaved RseA to release the cytoplasmic domain of RseA, residue 'Val-148' of RseA may be required for this. This provides the cell with sigma-E (RpoE) activity through the proteolysis of RseA. Can also cleave sequences in transmembrane regions of other proteins (such as LacY) as well as liberated signal peptides of beta-lactamase, OmpF, LivK, SecM, PhoA, LivJ, OmpC, Lpp and TorA, probably within the membrane. Cleaves FecR within its transmembrane region to release an N-terminal cytoplasmic fragment which binds to sigma factor FecI, allowing it to activate transcription of the fecABCDE operon which mediates ferric citrate transport. The sequence is that of Regulator of sigma-E protease RseP (rseP) from Escherichia coli (strain K12).